A 94-amino-acid chain; its full sequence is MSGRFAFNKGLKEVRFLFCQTGEHSAATRSFLLRNYPAMKKDNPATPILIRDASGTLPKVYARFEFGKEKSQSLEGLSDQQIEETVSSLVKNNS.

The protein belongs to the complex I NDUFA2 subunit family. In terms of assembly, complex I is composed of about 40 different subunits.

It is found in the mitochondrion inner membrane. Functionally, accessory subunit of the mitochondrial membrane respiratory chain NADH dehydrogenase (Complex I), that is believed not to be involved in catalysis. Complex I functions in the transfer of electrons from NADH to the respiratory chain. The immediate electron acceptor for the enzyme is believed to be ubiquinone. The polypeptide is NADH-ubiquinone oxidoreductase 10.5 kDa subunit (nuo-10.5) (Neurospora crassa (strain ATCC 24698 / 74-OR23-1A / CBS 708.71 / DSM 1257 / FGSC 987)).